Consider the following 364-residue polypeptide: Fructose-bisphosphate aldolase A (364 aa).

The residue at position 5 (tyrosine 5) is a Phosphotyrosine. A Phosphothreonine modification is found at threonine 9. Serine 36 and serine 39 each carry phosphoserine. The residue at position 42 (lysine 42) is an N6-acetyllysine; alternate. Residue lysine 42 forms a Glycyl lysine isopeptide (Lys-Gly) (interchain with G-Cter in SUMO1); alternate linkage. Lysine 42 participates in a covalent cross-link: Glycyl lysine isopeptide (Lys-Gly) (interchain with G-Cter in SUMO2); alternate. Arginine 43 contributes to the beta-D-fructose 1,6-bisphosphate binding site. Position 46 is a phosphoserine (serine 46). Position 99 is an N6-(2-hydroxyisobutyryl)lysine (lysine 99). Lysine 108 is modified (N6-acetyllysine). An N6-acetyllysine; alternate modification is found at lysine 111. N6-malonyllysine; alternate is present on lysine 111. Serine 132 is subject to Phosphoserine. Lysine 147 is modified (N6-(2-hydroxyisobutyryl)lysine). The active-site Proton acceptor is the glutamate 188. The active-site Schiff-base intermediate with dihydroxyacetone-P is lysine 230. Serine 272 carries the phosphoserine modification. Residues 272–274 (SGG), serine 301, and arginine 304 each bind beta-D-fructose 1,6-bisphosphate. Lysine 312 bears the N6-malonyllysine mark. Lysine 330 carries the post-translational modification N6-acetyllysine.

This sequence belongs to the class I fructose-bisphosphate aldolase family. Homotetramer. Interacts with SNX9 and WAS. Interacts with FBP2; the interaction blocks FBP2 inhibition by physiological concentrations of AMP and reduces inhibition by Ca(2+).

The protein resides in the cytoplasm. Its subcellular location is the myofibril. It is found in the sarcomere. It localises to the i band. The protein localises to the m line. The enzyme catalyses beta-D-fructose 1,6-bisphosphate = D-glyceraldehyde 3-phosphate + dihydroxyacetone phosphate. Its pathway is carbohydrate degradation; glycolysis; D-glyceraldehyde 3-phosphate and glycerone phosphate from D-glucose: step 4/4. Functionally, catalyzes the reversible conversion of beta-D-fructose 1,6-bisphosphate (FBP) into two triose phosphate and plays a key role in glycolysis and gluconeogenesis. In addition, may also function as scaffolding protein. This is Fructose-bisphosphate aldolase A (Aldoa) from Mus musculus (Mouse).